We begin with the raw amino-acid sequence, 157 residues long: S-ribosylhomocysteine lyase (157 aa).

Histidine 54, histidine 58, and cysteine 126 together coordinate Fe cation.

The protein belongs to the LuxS family. As to quaternary structure, homodimer. The cofactor is Fe cation.

The catalysed reaction is S-(5-deoxy-D-ribos-5-yl)-L-homocysteine = (S)-4,5-dihydroxypentane-2,3-dione + L-homocysteine. Functionally, involved in the synthesis of autoinducer 2 (AI-2) which is secreted by bacteria and is used to communicate both the cell density and the metabolic potential of the environment. The regulation of gene expression in response to changes in cell density is called quorum sensing. Catalyzes the transformation of S-ribosylhomocysteine (RHC) to homocysteine (HC) and 4,5-dihydroxy-2,3-pentadione (DPD). The polypeptide is S-ribosylhomocysteine lyase (Bacillus anthracis (strain A0248)).